The primary structure comprises 326 residues: UDP-3-O-acylglucosamine N-acyltransferase (326 aa).

H235 functions as the Proton acceptor in the catalytic mechanism.

The protein belongs to the transferase hexapeptide repeat family. LpxD subfamily. As to quaternary structure, homotrimer.

It catalyses the reaction a UDP-3-O-[(3R)-3-hydroxyacyl]-alpha-D-glucosamine + a (3R)-hydroxyacyl-[ACP] = a UDP-2-N,3-O-bis[(3R)-3-hydroxyacyl]-alpha-D-glucosamine + holo-[ACP] + H(+). The protein operates within bacterial outer membrane biogenesis; LPS lipid A biosynthesis. Its function is as follows. Catalyzes the N-acylation of UDP-3-O-acylglucosamine using 3-hydroxyacyl-ACP as the acyl donor. Is involved in the biosynthesis of lipid A, a phosphorylated glycolipid that anchors the lipopolysaccharide to the outer membrane of the cell. In Helicobacter hepaticus (strain ATCC 51449 / 3B1), this protein is UDP-3-O-acylglucosamine N-acyltransferase.